We begin with the raw amino-acid sequence, 320 residues long: Alpha/beta hydrolase domain-containing protein 17C (320 aa).

The tract at residues 50–75 (RAPAPAATPAPAPAAQPAPAEEGAGP) is disordered. Residues 55–65 (AATPAPAPAAQ) show a composition bias toward pro residues. Active-site charge relay system residues include serine 202, aspartate 267, and histidine 296.

It belongs to the AB hydrolase superfamily. ABHD17 family. Post-translationally, palmitoylated on cysteine residues located in a cysteine cluster at the N-terminus which promotes membrane localization. Palmitoylation is required for post-synaptic localization and for depalmitoylating activity towards DLG4/PSD95.

The protein resides in the recycling endosome membrane. It is found in the cell projection. The protein localises to the dendritic spine. Its subcellular location is the postsynaptic density membrane. The catalysed reaction is S-hexadecanoyl-L-cysteinyl-[protein] + H2O = L-cysteinyl-[protein] + hexadecanoate + H(+). Functionally, hydrolyzes fatty acids from S-acylated cysteine residues in proteins. Has depalmitoylating activity towards DLG4/PSD95. This Mus musculus (Mouse) protein is Alpha/beta hydrolase domain-containing protein 17C.